Consider the following 985-residue polypeptide: Exocyst complex component 4 (985 aa).

A coiled-coil region spans residues 36–70 (SETTEERQKEKQKIEAEFKRSDLRLNELVSRHDQQ). Phosphoserine is present on residues Ser-235, Ser-456, Ser-459, Ser-682, and Ser-686. The disordered stretch occupies residues 434–480 (DKSSHVGTSNNSDAFKEHRRNASDASVDDNLAGQLGGSGKGSTSGLF).

It belongs to the SEC8 family. As to quaternary structure, the exocyst complex is composed of Sec3/Exoc1, Sec5/Exoc2, Sec6/Exoc3, Sec8/Exoc4, Sec10/Exoc5, Sec15/Exoc6, exo70/Exoc7 and Exo84/Exoc8. Abundant in the embryonic and larval glutamatergic neuromuscular junctions (NMJs), pre and postsynaptically.

In terms of biological role, component of the exocyst complex involved in the docking of exocytic vesicles with fusion sites on the plasma membrane. Involved in regulation of synaptic microtubule formation, and also regulation of synaptic growth and glutamate receptor trafficking. Does not appear to be required for basal neurotransmission. The chain is Exocyst complex component 4 from Drosophila melanogaster (Fruit fly).